Consider the following 275-residue polypeptide: Putative pyruvate, phosphate dikinase regulatory protein (275 aa).

ADP is bound at residue 149–156; that stretch reads GVSRTSKT.

The protein belongs to the pyruvate, phosphate/water dikinase regulatory protein family. PDRP subfamily.

The enzyme catalyses N(tele)-phospho-L-histidyl/L-threonyl-[pyruvate, phosphate dikinase] + ADP = N(tele)-phospho-L-histidyl/O-phospho-L-threonyl-[pyruvate, phosphate dikinase] + AMP + H(+). It catalyses the reaction N(tele)-phospho-L-histidyl/O-phospho-L-threonyl-[pyruvate, phosphate dikinase] + phosphate + H(+) = N(tele)-phospho-L-histidyl/L-threonyl-[pyruvate, phosphate dikinase] + diphosphate. Bifunctional serine/threonine kinase and phosphorylase involved in the regulation of the pyruvate, phosphate dikinase (PPDK) by catalyzing its phosphorylation/dephosphorylation. The polypeptide is Putative pyruvate, phosphate dikinase regulatory protein (Levilactobacillus brevis (strain ATCC 367 / BCRC 12310 / CIP 105137 / JCM 1170 / LMG 11437 / NCIMB 947 / NCTC 947) (Lactobacillus brevis)).